Consider the following 118-residue polypeptide: Actin depolymerizing factor ADF (118 aa).

Residues 4–118 enclose the ADF-H domain; that stretch reads GMGVDENCVA…HEMGDLAPLA (115 aa).

It belongs to the actin-binding proteins ADF family. In terms of assembly, interacts with ACT1 (G-actin); the interaction results in inhibition of actin polymerization. Interacts with DPA; the interaction enhances ADF activity in disassembly of filamentous actin and inhibition of actin polymerization.

The protein localises to the cytoplasm. Inhibits actin polymerization. Promotes actin depolymerization. Strongly sequesters actin monomers (G-actin). Weakly severs actin filaments (F-actin). The protein is Actin depolymerizing factor ADF of Toxoplasma gondii.